Here is a 798-residue protein sequence, read N- to C-terminus: Integrin beta-1 (798 aa).

The signal sequence occupies residues 1–20 (MNLQPIFWIGLISSICCVFA). Residues 26 to 76 (RCLKANAKSCGECIQAGPNCGWCTNSTFLQEGMPTSARCDDLEALKKKGCP) enclose the PSI domain. Intrachain disulfides connect C27–C45, C35–C464, C38–C64, C48–C75, C207–C213, C261–C301, C401–C415, C435–C462, C466–C486, C477–C489, C491–C500, C502–C533, C516–C531, C525–C536, C538–C553, C555–C576, C560–C574, C568–C579, C581–C590, C592–C615, C599–C613, C607–C618, C620–C630, C633–C636, C640–C691, C646–C665, C649–C661, and C699–C723. N-linked (GlcNAc...) asparagine glycosylation is present at N50. Residues 75–107 (CPPDDIENPRGSKDIKKNKNVTNRSKGTAEKLK) form a disordered region. Residues 81 to 91 (ENPRGSKDIKK) show a composition bias toward basic and acidic residues. N-linked (GlcNAc...) asparagine glycans are attached at residues N94 and N97. The 239-residue stretch at 140-378 (DYPIDLYYLM…QLIIDAYNSL (239 aa)) folds into the VWFA domain. Residues S152 and S154 each coordinate Mg(2+). Positions 154, 157, 158, and 189 each coordinate Ca(2+). The interval 207 to 213 (CTSEQNC) is CX3CL1-binding. N212 carries N-linked (GlcNAc...) asparagine glycosylation. Positions 244, 246, 248, and 249 each coordinate Ca(2+). A Mg(2+)-binding site is contributed by E249. N269 carries N-linked (GlcNAc...) asparagine glycosylation. The tract at residues 295 to 314 (LPNDGQCHLENNMYTMSHYY) is CX3CL1-binding. A362 serves as a coordination point for Ca(2+). Residues N363, N406, and N417 are each glycosylated (N-linked (GlcNAc...) asparagine). Positions 383 to 465 (ILENSKLSEG…VILQYICECE (83 aa)) are interaction with TMEM182. 4 I-EGF domains span residues 466 to 501 (CQSE…RHCE), 502 to 554 (CSTD…KFCE), 555 to 591 (CDNF…SACD), and 592 to 631 (CSLD…QTCE). Residue N481 is glycosylated (N-linked (GlcNAc...) asparagine). N520 is a glycosylation site (N-linked (GlcNAc...) asparagine). N-linked (GlcNAc...) asparagine glycosylation is present at N584. N669 is a glycosylation site (N-linked (GlcNAc...) asparagine). The chain crosses the membrane as a helical span at residues 729–749 (IIPIVAGVVAGIVLIGLALLL). The segment at 762-767 (EFAKFE) is signal for sorting from recycling endosomes; interaction with ACAP1. T777 carries the phosphothreonine modification. Y783 is modified (phosphotyrosine). A Phosphoserine modification is found at S785. Positions 785 to 792 (SAVTTVVN) are interaction with ITGB1BP1. T789 is modified (phosphothreonine). Residue K794 is modified to N6-acetyllysine; alternate. K794 participates in a covalent cross-link: Glycyl lysine isopeptide (Lys-Gly) (interchain with G-Cter in SUMO1); alternate.

Belongs to the integrin beta chain family. In terms of assembly, interacts with seprase FAP (seprase); the interaction occurs at the cell surface of invadopodia membrane in a collagen-dependent manner. Heterodimer of an alpha and a beta subunit. Beta-1 associates with either alpha-1, alpha-2, alpha-3, alpha-4, alpha-5, alpha-6, alpha-7, alpha-8, alpha-9, alpha-10, alpha-11 or alpha-V. ITGA6:ITGB1 is found in a complex with CD9; interaction takes place in oocytes and is involved in sperm-egg fusion. Binds LGALS3BP and NMRK2, when associated with alpha-7, but not with alpha-5. Interacts with FLNA, FLNB, FLNC and RANBP9. Interacts with KRT1 in the presence of RACK1 and SRC. Interacts with JAML; integrin alpha-4/beta-1 may regulate leukocyte to endothelial cells adhesion by controlling JAML homodimerization. Interacts with RAB21. Interacts (via the cytoplasmic region) with RAB25 (via the hypervariable C-terminal region). Interacts with MYO10. Interacts with ITGB1BP1 (via C-terminal region); the interaction is a prerequisite for focal adhesion disassembly. Interacts with TLN1; the interaction is prevented by competitive binding of ITGB1BP1. Interacts with ACAP1; required for ITGB1 recycling. Interacts with ASAP3. Interacts with FERMT2; the interaction is inhibited in presence of ITGB1BP1. Interacts with DAB2. Interacts with FGR and HCK. Interacts with alpha-7A and alpha-7B in adult skeletal muscle. Interacts with alpha-7B in cardiomyocytes of adult heart. Interacts with EMP2; the interaction may be direct or indirect and ITGB1 has a heterodimer form. ITGA5:ITGB1 interacts with CCN3. ITGA4:ITGB1 is found in a ternary complex with CX3CR1 and CX3CL1. ITGA5:ITGB1 interacts with FBN1. ITGA5:ITGB1 acts as a receptor for fibronectin FN1 and mediates R-G-D-dependent cell adhesion to FN1. ITGA5:ITGB1 interacts with IL1B. Interacts with MDK. ITGA4:ITGB1 interacts with MDK; this interaction mediates MDK-induced osteoblast cells migration through PXN phosphorylation. ITGA6:ITGB1 interacts with MDK; this interaction mediates MDK-induced neurite-outgrowth. ITGA5:ITGB1 interacts with ACE2. Interacts with TMEM182 and LAMB1. Interacts with tensin TNS3; TNS3 also interacts with PEAK1, thus acting as an adapter molecule to bridge the association of PEAK1 with ITGB1. Interacts with tensin TNS4; the interaction displaces tensin TNS3 from the ITGB1 cytoplasmic tail and promotes ITGB1 stability. Integrin ITGA9:ITGB1 interacts with SPP1/OPN (via N-terminus). Integrin ITGA9:ITGB1 interacts with TNC/TNFN3 (via the 3rd Fibronectin type-III domain). Integrins ITGA4:ITGB1 and ITGA9:ITGB1 interact with SVEP1 (via Sushi domain 21); thereby inhibit Ca(2+) intracellular signaling and as a result repress vasocontraction. ITGA4:ITGB1 and ITGA5:ITGB1 interacts with SELP. Interacts with CD248. ITGA5:ITGB1 interacts with IGFBP1. ITGA4:ITGB1 interacts with BCAM. Interacts with ADGRG6.

The protein localises to the cell membrane. Its subcellular location is the cell projection. It localises to the invadopodium membrane. It is found in the ruffle membrane. The protein resides in the recycling endosome. The protein localises to the melanosome. Its subcellular location is the lamellipodium. It localises to the ruffle. It is found in the cell junction. The protein resides in the focal adhesion. In terms of biological role, integrins alpha-1/beta-1, alpha-2/beta-1, alpha-10/beta-1 and alpha-11/beta-1 are receptors for collagen. Integrins alpha-1/beta-1 and alpha-2/beta-2 recognize the proline-hydroxylated sequence G-F-P-G-E-R in collagen. Integrins alpha-2/beta-1, alpha-3/beta-1, alpha-4/beta-1, alpha-5/beta-1, alpha-8/beta-1, alpha-10/beta-1, alpha-11/beta-1 and alpha-V/beta-1 are receptors for fibronectin. Alpha-4/beta-1 recognizes one or more domains within the alternatively spliced CS-1 and CS-5 regions of fibronectin. Integrin alpha-5/beta-1 is a receptor for fibrinogen. Integrin alpha-1/beta-1, alpha-2/beta-1, alpha-6/beta-1 and alpha-7/beta-1 are receptors for lamimin. Integrin alpha-6/beta-1 (ITGA6:ITGB1) is present in oocytes and is involved in sperm-egg fusion. Integrin alpha-4/beta-1 is a receptor for VCAM1 and recognizes the sequence Q-I-D-S in VCAM1. Integrin alpha-9/beta-1 is a receptor for VCAM1, cytotactin and osteopontin. It recognizes the sequence A-E-I-D-G-I-E-L in cytotactin. Integrin alpha-3/beta-1 is a receptor for epiligrin, thrombospondin and CSPG4. Integrin alpha-3/beta-1 provides a docking site for FAP (seprase) at invadopodia plasma membranes in a collagen-dependent manner and hence may participate in the adhesion, formation of invadopodia and matrix degradation processes, promoting cell invasion. Alpha-3/beta-1 may mediate with LGALS3 the stimulation by CSPG4 of endothelial cells migration. Integrin alpha-V/beta-1 is a receptor for vitronectin. Beta-1 integrins recognize the sequence R-G-D in a wide array of ligands. When associated with alpha-7/beta-1 integrin, regulates cell adhesion and laminin matrix deposition. Involved in promoting endothelial cell motility and angiogenesis. Involved in osteoblast compaction through the fibronectin fibrillogenesis cell-mediated matrix assembly process and the formation of mineralized bone nodules. May be involved in up-regulation of the activity of kinases such as PKC via binding to KRT1. Together with KRT1 and RACK1, serves as a platform for SRC activation or inactivation. Plays a mechanistic adhesive role during telophase, required for the successful completion of cytokinesis. ITGA4:ITGB1 binds to fractalkine (CX3CL1) and may act as its coreceptor in CX3CR1-dependent fractalkine signaling. ITGA4:ITGB1 and ITGA5:ITGB1 bind to PLA2G2A via a site (site 2) which is distinct from the classical ligand-binding site (site 1) and this induces integrin conformational changes and enhanced ligand binding to site 1. ITGA5:ITGB1 acts as a receptor for fibrillin-1 (FBN1) and mediates R-G-D-dependent cell adhesion to FBN1. ITGA5:ITGB1 is a receptor for IL1B and binding is essential for IL1B signaling. ITGA5:ITGB3 is a receptor for soluble CD40LG and is required for CD40/CD40LG signaling. Plays an important role in myoblast differentiation and fusion during skeletal myogenesis. ITGA9:ITGB1 may play a crucial role in SVEP1/polydom-mediated myoblast cell adhesion. Integrins ITGA9:ITGB1 and ITGA4:ITGB1 repress PRKCA-mediated L-type voltage-gated channel Ca(2+) influx and ROCK-mediated calcium sensitivity in vascular smooth muscle cells via their interaction with SVEP1, thereby inhibit vasocontraction. This Pongo abelii (Sumatran orangutan) protein is Integrin beta-1 (ITGB1).